Consider the following 631-residue polypeptide: Chaperone protein HtpG (631 aa).

An a; substrate-binding region spans residues 1-338 (MILKEQETLG…CNDLPLNISR (338 aa)). The interval 339–554 (EMLQHNRITQ…SNNMTTHMAK (216 aa)) is b. The interval 555 to 631 (LIVASGQNKP…KLLNHDTIVN (77 aa)) is c.

This sequence belongs to the heat shock protein 90 family. In terms of assembly, homodimer.

It is found in the cytoplasm. Functionally, molecular chaperone. Has ATPase activity. The sequence is that of Chaperone protein HtpG from Baumannia cicadellinicola subsp. Homalodisca coagulata.